We begin with the raw amino-acid sequence, 397 residues long: Iripin-2 (397 aa).

Residues 1–21 form the signal peptide; that stretch reads MEDFKMKTLAAFLSLLVLCWA. Asn-109 and Asn-270 each carry an N-linked (GlcNAc...) asparagine glycan.

This sequence belongs to the serpin family. Interacts with mouse MCPT4. Female salivary gland. Ovary. Midgut.

Its subcellular location is the secreted. Functionally, serine protease inhibitor that modulates blood feeding of ticks on vertebrate species. Inhibits host trypsin, thrombin (F2), alpha-chymotrypsin, cathepsin G (CTSG) and mast cell chymase (CMA1). Inhibits host cathepsin G- and thrombin-induced platelet aggregation. Inhibits acute inflammation in the host. Suppresses neutrophil recruitment in inflamed area. Does not inhibit host plasmin (PLG), factor Xa (F10), factor XIa (F11), elastase and proteinase 3/myeloblastin (PRTN3). In terms of biological role, (Microbial infection) Inhibits IL6 production by mouse splenic dendritic cells in response to Borrelia burgdorferi exposure. Decreases levels of STAT3 phosphorylation in mouse splenic dendritic cells in response to Borrelia burgdorferi exposure and in Borrelia-primed CD4+ T-lymphocytes. Inhibits differentiation of mouse Th17 cells, a subset of CD4+ T-lymphocytes that play a crucial role in protection against extracellular bacteria, in response to Borrelia burgdorferi exposure via inhibition of the IL6/STAT3 signaling pathway. The polypeptide is Iripin-2 (Ixodes ricinus (Common tick)).